Consider the following 512-residue polypeptide: Centrosomal protein CCDC61 (512 aa).

N-acetylmethionine is present on Met1. Residues 1–142 are head domain; it reads MEQPAGLQVD…PLPLPYQGKP (142 aa). Coiled coils occupy residues 176-203 and 246-273; these read WHLREQVTRLASEKRELEAQLGRSREEA and RRLAKELEEVKASERNLRARLKTLNCEL. At Thr282 the chain carries Phosphothreonine. 2 disordered regions span residues 282–415 and 430–472; these read TLPA…SFRS and SQSV…HLAS. The segment covering 287–300 has biased composition (basic and acidic residues); the sequence is AREDRALSSRERST. A phosphoserine mark is found at Ser328, Ser330, Ser372, and Ser375. The segment covering 406 to 415 has biased composition (low complexity); sequence RSSSVDSFRS. 2 positions are modified to phosphoserine: Ser447 and Ser473.

Belongs to the CCDC61 family. In terms of assembly, forms homodimers (via head domain). Interacts with CEP170. Interacts with PCM1 and CEP131. Binds tubulin.

The protein localises to the cytoplasm. It localises to the cytoskeleton. It is found in the microtubule organizing center. Its subcellular location is the centrosome. The protein resides in the centriolar satellite. The protein localises to the cilium basal body. Its function is as follows. Microtubule-binding centrosomal protein required for centriole cohesion, independently of the centrosome-associated protein/CEP250 and rootletin/CROCC linker. In interphase, required for anchoring microtubule at the mother centriole subdistal appendages and for centrosome positioning. During mitosis, may be involved in spindle assembly and chromatin alignment by regulating the organization of spindle microtubules into a symmetrical structure. Plays a non-essential role in ciliogenesis. This is Centrosomal protein CCDC61 from Rattus norvegicus (Rat).